The sequence spans 342 residues: Phosphoribosylformylglycinamidine cyclo-ligase (342 aa).

Belongs to the AIR synthase family.

It localises to the cytoplasm. It carries out the reaction 2-formamido-N(1)-(5-O-phospho-beta-D-ribosyl)acetamidine + ATP = 5-amino-1-(5-phospho-beta-D-ribosyl)imidazole + ADP + phosphate + H(+). The protein operates within purine metabolism; IMP biosynthesis via de novo pathway; 5-amino-1-(5-phospho-D-ribosyl)imidazole from N(2)-formyl-N(1)-(5-phospho-D-ribosyl)glycinamide: step 2/2. This Latilactobacillus sakei subsp. sakei (strain 23K) (Lactobacillus sakei subsp. sakei) protein is Phosphoribosylformylglycinamidine cyclo-ligase.